The chain runs to 318 residues: Transaldolase (318 aa).

The Schiff-base intermediate with substrate role is filled by Lys-131.

The protein belongs to the transaldolase family. Type 1 subfamily. Homodimer.

The protein localises to the cytoplasm. The enzyme catalyses D-sedoheptulose 7-phosphate + D-glyceraldehyde 3-phosphate = D-erythrose 4-phosphate + beta-D-fructose 6-phosphate. It participates in carbohydrate degradation; pentose phosphate pathway; D-glyceraldehyde 3-phosphate and beta-D-fructose 6-phosphate from D-ribose 5-phosphate and D-xylulose 5-phosphate (non-oxidative stage): step 2/3. In terms of biological role, transaldolase is important for the balance of metabolites in the pentose-phosphate pathway. The protein is Transaldolase of Cellvibrio japonicus (strain Ueda107) (Pseudomonas fluorescens subsp. cellulosa).